The following is a 169-amino-acid chain: Peptide methionine sulfoxide reductase MsrA (169 aa).

Cys-13 is a catalytic residue.

It belongs to the MsrA Met sulfoxide reductase family.

The catalysed reaction is L-methionyl-[protein] + [thioredoxin]-disulfide + H2O = L-methionyl-(S)-S-oxide-[protein] + [thioredoxin]-dithiol. It catalyses the reaction [thioredoxin]-disulfide + L-methionine + H2O = L-methionine (S)-S-oxide + [thioredoxin]-dithiol. Functionally, has an important function as a repair enzyme for proteins that have been inactivated by oxidation. Catalyzes the reversible oxidation-reduction of methionine sulfoxide in proteins to methionine. The chain is Peptide methionine sulfoxide reductase MsrA from Mycolicibacterium gilvum (strain PYR-GCK) (Mycobacterium gilvum (strain PYR-GCK)).